A 910-amino-acid chain; its full sequence is Alanine--tRNA ligase (910 aa).

Residues 488–505 show a composition bias toward basic and acidic residues; the sequence is RHEEKKEDSKSEKGENTA. Positions 488–507 are disordered; that stretch reads RHEEKKEDSKSEKGENTAEK. Zn(2+)-binding residues include histidine 614, histidine 618, cysteine 718, and histidine 722.

Belongs to the class-II aminoacyl-tRNA synthetase family. The cofactor is Zn(2+).

It is found in the cytoplasm. It carries out the reaction tRNA(Ala) + L-alanine + ATP = L-alanyl-tRNA(Ala) + AMP + diphosphate. Catalyzes the attachment of alanine to tRNA(Ala) in a two-step reaction: alanine is first activated by ATP to form Ala-AMP and then transferred to the acceptor end of tRNA(Ala). Also edits incorrectly charged Ser-tRNA(Ala) and Gly-tRNA(Ala) via its editing domain. The protein is Alanine--tRNA ligase of Methanococcus aeolicus (strain ATCC BAA-1280 / DSM 17508 / OCM 812 / Nankai-3).